Consider the following 690-residue polypeptide: Peroxidase (690 aa).

The N-terminal stretch at 1–20 (MIRARDLLLLALLGFISSAL) is a signal peptide. A disulfide bond links Cys100 and Cys112. His185 functions as the Proton acceptor in the catalytic mechanism. The N-linked (GlcNAc...) asparagine glycan is linked to Asn310. The cysteines at positions 315 and 324 are disulfide-linked. His437 contributes to the heme b binding site. Cystine bridges form between Cys536–Cys592 and Cys636–Cys662.

The protein belongs to the peroxidase family. XPO subfamily. The cofactor is heme b.

Its subcellular location is the secreted. The catalysed reaction is 2 a phenolic donor + H2O2 = 2 a phenolic radical donor + 2 H2O. Involved in the chorion hardening process, through protein cross-linking mediated by the formation of di- and tri-tyrosine bonds. In Drosophila melanogaster (Fruit fly), this protein is Peroxidase (Pxd).